Here is a 467-residue protein sequence, read N- to C-terminus: Xanthan biosynthesis protein XanB (467 aa).

It belongs to the mannose-6-phosphate isomerase type 2 family.

The catalysed reaction is D-mannose 6-phosphate = D-fructose 6-phosphate. The enzyme catalyses alpha-D-mannose 1-phosphate + GTP + H(+) = GDP-alpha-D-mannose + diphosphate. It functions in the pathway nucleotide-sugar biosynthesis; GDP-alpha-D-mannose biosynthesis; GDP-alpha-D-mannose from alpha-D-mannose 1-phosphate (GTP route): step 1/1. The protein operates within nucleotide-sugar biosynthesis; GDP-alpha-D-mannose biosynthesis; alpha-D-mannose 1-phosphate from D-fructose 6-phosphate: step 1/2. In terms of biological role, involved in xanthan production. The sequence is that of Xanthan biosynthesis protein XanB (xanB) from Xanthomonas campestris pv. campestris (strain ATCC 33913 / DSM 3586 / NCPPB 528 / LMG 568 / P 25).